The primary structure comprises 128 residues: Large ribosomal subunit protein bL17 (128 aa).

This sequence belongs to the bacterial ribosomal protein bL17 family. Part of the 50S ribosomal subunit. Contacts protein L32.

This is Large ribosomal subunit protein bL17 from Streptococcus pyogenes serotype M5 (strain Manfredo).